The chain runs to 473 residues: PEP-dependent dihydroxyacetone kinase, phosphoryl donor subunit DhaM (473 aa).

The region spanning methionine 1–isoleucine 137 is the PTS EIIA type-4 domain. Histidine 9 serves as the catalytic Tele-phosphohistidine intermediate. One can recognise an HPr domain in the interval alanine 155–histidine 242. Histidine 169 serves as the catalytic Pros-phosphohistidine intermediate. The segment at proline 266 to cysteine 472 is PTS EI-like, N-terminal part. Catalysis depends on histidine 432, which acts as the Tele-phosphohistidine intermediate.

It belongs to the PEP-utilizing enzyme family. Homodimer. The dihydroxyacetone kinase complex is composed of a homodimer of DhaM, a homodimer of DhaK and the subunit DhaL.

It catalyses the reaction dihydroxyacetone + phosphoenolpyruvate = dihydroxyacetone phosphate + pyruvate. Its function is as follows. Component of the dihydroxyacetone kinase complex, which is responsible for the phosphoenolpyruvate (PEP)-dependent phosphorylation of dihydroxyacetone. DhaM serves as the phosphoryl donor. Is phosphorylated by phosphoenolpyruvate in an EI- and HPr-dependent reaction, and a phosphorelay system on histidine residues finally leads to phosphoryl transfer to DhaL and dihydroxyacetone. The polypeptide is PEP-dependent dihydroxyacetone kinase, phosphoryl donor subunit DhaM (Pantoea ananatis (strain LMG 20103)).